The primary structure comprises 213 residues: Macrodontain-1 (213 aa).

Cystine bridges form between cysteine 23/cysteine 63, cysteine 57/cysteine 96, and cysteine 153/cysteine 201. Residue cysteine 26 is part of the active site. Catalysis depends on residues histidine 159 and asparagine 176.

As to quaternary structure, monomer. In terms of tissue distribution, fruits.

With respect to regulation, inhibited by the general cysteine protease inhibitor E64 (L-trans-epoxysuccinyl-leucylamide-(4-guanido)-butane). Cysteine protease that catalyzes the preferential cleavage: Ala-|-Xaa &gt; Gln-|-Xaa &gt; Tyr-Xaa &gt;&gt; Leu-|-Xaa &gt; Gly-|-Xaa. Hydrolyzes the synthetic peptide substrate Bz-Phe-Val-Arg-pNA. In Ananas macrodontes (False pineapple), this protein is Macrodontain-1.